A 194-amino-acid polypeptide reads, in one-letter code: Peptidyl-tRNA hydrolase (194 aa).

Residue tyrosine 17 participates in tRNA binding. Histidine 22 functions as the Proton acceptor in the catalytic mechanism. TRNA-binding residues include tyrosine 68, asparagine 70, and asparagine 116.

The protein belongs to the PTH family. In terms of assembly, monomer.

It localises to the cytoplasm. The enzyme catalyses an N-acyl-L-alpha-aminoacyl-tRNA + H2O = an N-acyl-L-amino acid + a tRNA + H(+). In terms of biological role, hydrolyzes ribosome-free peptidyl-tRNAs (with 1 or more amino acids incorporated), which drop off the ribosome during protein synthesis, or as a result of ribosome stalling. Functionally, catalyzes the release of premature peptidyl moieties from peptidyl-tRNA molecules trapped in stalled 50S ribosomal subunits, and thus maintains levels of free tRNAs and 50S ribosomes. The sequence is that of Peptidyl-tRNA hydrolase from Pseudomonas putida (strain ATCC 700007 / DSM 6899 / JCM 31910 / BCRC 17059 / LMG 24140 / F1).